A 288-amino-acid polypeptide reads, in one-letter code: 4-diphosphocytidyl-2-C-methyl-D-erythritol kinase (288 aa).

Lys-13 is a catalytic residue. Residue Pro-97–Ser-107 participates in ATP binding. Residue Asp-139 is part of the active site.

Belongs to the GHMP kinase family. IspE subfamily.

It carries out the reaction 4-CDP-2-C-methyl-D-erythritol + ATP = 4-CDP-2-C-methyl-D-erythritol 2-phosphate + ADP + H(+). Its pathway is isoprenoid biosynthesis; isopentenyl diphosphate biosynthesis via DXP pathway; isopentenyl diphosphate from 1-deoxy-D-xylulose 5-phosphate: step 3/6. In terms of biological role, catalyzes the phosphorylation of the position 2 hydroxy group of 4-diphosphocytidyl-2C-methyl-D-erythritol. In Saccharophagus degradans (strain 2-40 / ATCC 43961 / DSM 17024), this protein is 4-diphosphocytidyl-2-C-methyl-D-erythritol kinase.